The sequence spans 186 residues: Ribosome-recycling factor (186 aa).

The protein belongs to the RRF family.

The protein localises to the cytoplasm. Responsible for the release of ribosomes from messenger RNA at the termination of protein biosynthesis. May increase the efficiency of translation by recycling ribosomes from one round of translation to another. This is Ribosome-recycling factor from Pelodictyon phaeoclathratiforme (strain DSM 5477 / BU-1).